The sequence spans 645 residues: Rho GTPase-activating protein 25 (645 aa).

The PH domain occupies 46-151; sequence RPIKMGWLKK…WVKFLRRVAG (106 aa). The Rho-GAP domain maps to 159-353; the sequence is QRLDETVAYE…MMIRDHEVLF (195 aa). Disordered stretches follow at residues 355–444 and 469–550; these read KSKD…QTLP and FWSP…EEEI. Residues Ser362 and Ser395 each carry the phosphoserine modification. Positions 393–409 are enriched in low complexity; the sequence is TDSFSSMTSDSDTTSPT. Position 406 is a phosphothreonine (Thr406). Positions 420–431 are enriched in basic and acidic residues; sequence DSSKVPREKPGD. A compositionally biased stretch (polar residues) spans 487–504; sequence SQDLRQLSDSQRTSTYDN. Ser536 carries the post-translational modification Phosphoserine. Residues 541 to 644 are a coiled coil; that stretch reads GKKNSGEEEI…VKSMKEPKTE (104 aa).

Its function is as follows. GTPase activator for the Rho-type GTPases by converting them to an inactive GDP-bound state. The protein is Rho GTPase-activating protein 25 (ARHGAP25) of Homo sapiens (Human).